A 338-amino-acid chain; its full sequence is Glycerol-3-phosphate dehydrogenase [NAD(P)+] (338 aa).

Positions 13, 14, and 108 each coordinate NADPH. 3 residues coordinate sn-glycerol 3-phosphate: Lys108, Gly139, and Ser141. Ala143 is a binding site for NADPH. 5 residues coordinate sn-glycerol 3-phosphate: Lys194, Asp247, Ser257, Arg258, and Asn259. The active-site Proton acceptor is the Lys194. Arg258 is a binding site for NADPH. The NADPH site is built by Val282 and Glu284.

Belongs to the NAD-dependent glycerol-3-phosphate dehydrogenase family.

The protein localises to the cytoplasm. It catalyses the reaction sn-glycerol 3-phosphate + NAD(+) = dihydroxyacetone phosphate + NADH + H(+). It carries out the reaction sn-glycerol 3-phosphate + NADP(+) = dihydroxyacetone phosphate + NADPH + H(+). Its pathway is membrane lipid metabolism; glycerophospholipid metabolism. Its function is as follows. Catalyzes the reduction of the glycolytic intermediate dihydroxyacetone phosphate (DHAP) to sn-glycerol 3-phosphate (G3P), the key precursor for phospholipid synthesis. This chain is Glycerol-3-phosphate dehydrogenase [NAD(P)+], found in Streptococcus pyogenes serotype M2 (strain MGAS10270).